The primary structure comprises 511 residues: Maturase K (511 aa).

It belongs to the intron maturase 2 family. MatK subfamily.

The protein localises to the plastid. The protein resides in the chloroplast. Functionally, usually encoded in the trnK tRNA gene intron. Probably assists in splicing its own and other chloroplast group II introns. In Trifolium burchellianum (Wild clover), this protein is Maturase K.